We begin with the raw amino-acid sequence, 41 residues long: uncharacterized protein (41 aa).

The interval 1 to 41 (MGKKHRNRITGQKKNNHIPEKDIIAAEEAHGKEYSAAKRKP) is disordered. A compositionally biased stretch (basic and acidic residues) spans 17-41 (HIPEKDIIAAEEAHGKEYSAAKRKP).

This is an uncharacterized protein from Bacillus subtilis (strain 168).